A 258-amino-acid chain; its full sequence is Regulatory protein RecX (258 aa).

The protein belongs to the RecX family.

Its subcellular location is the cytoplasm. Its function is as follows. Modulates RecA activity. This Streptococcus pneumoniae (strain 70585) protein is Regulatory protein RecX.